We begin with the raw amino-acid sequence, 114 residues long: Cytochrome c2 (114 aa).

Gln-1 bears the Pyrrolidone carboxylic acid mark. Heme c is bound by residues Cys-13, Cys-16, His-17, and Met-93.

This sequence belongs to the cytochrome c family. Binds 1 heme c group covalently per subunit.

In terms of biological role, cytochrome c2 is found mainly in purple, non-sulfur, photosynthetic bacteria where it functions as the electron donor to the oxidized bacteriochlorophyll in the photophosphorylation pathway. However, it may also have a role in the respiratory chain and is found in some non-photosynthetic bacteria. In Rhodopseudomonas palustris, this protein is Cytochrome c2 (cycA).